Consider the following 229-residue polypeptide: DNA polymerase III subunit epsilon (229 aa).

The a divalent metal cation site is built by Asp10 and Glu12. Substrate-binding residues include Asp10, Glu12, Asp55, and His60. His156 (proton acceptor) is an active-site residue. Position 161 (Asp161) interacts with a divalent metal cation. Asp161 is a substrate binding site.

DNA polymerase III contains a core (composed of alpha, epsilon and theta chains) that associates with a tau subunit. This core dimerizes to form the POLIII' complex. PolIII' associates with the gamma complex (composed of gamma, delta, delta', psi and chi chains) and with the beta chain to form the complete DNA polymerase III complex. Requires Mg(2+) as cofactor. Mn(2+) serves as cofactor.

The catalysed reaction is DNA(n) + a 2'-deoxyribonucleoside 5'-triphosphate = DNA(n+1) + diphosphate. Functionally, DNA polymerase III is a complex, multichain enzyme responsible for most of the replicative synthesis in bacteria. The epsilon subunit contain the editing function and is a proofreading 3'-5' exonuclease. The protein is DNA polymerase III subunit epsilon (dnaQ) of Rickettsia felis (strain ATCC VR-1525 / URRWXCal2) (Rickettsia azadi).